A 277-amino-acid chain; its full sequence is S-formylglutathione hydrolase FrmB (277 aa).

Active-site charge relay system residues include serine 145, aspartate 221, and histidine 254.

It belongs to the esterase D family.

It carries out the reaction S-formylglutathione + H2O = formate + glutathione + H(+). Serine hydrolase involved in the detoxification of formaldehyde. Hydrolyzes S-formylglutathione to glutathione and formate. In Escherichia coli O6:H1 (strain CFT073 / ATCC 700928 / UPEC), this protein is S-formylglutathione hydrolase FrmB (frmB).